The following is a 757-amino-acid chain: Mitofusin-2 (757 aa).

Over 1–604 the chain is Cytoplasmic; sequence MSLLFSRCNS…TQEEFMVSMV (604 aa). A part of a helix bundle domain, formed by helices from N-terminal and C-terminal regions region spans residues 30–94; it reads KHFVTAKKKI…VRGISEVLAR (65 aa). The region spanning 93–342 is the Dynamin-type G domain; that stretch reads ARRHMKVAFF…VRMFEFQNFE (250 aa). Positions 103–110 are G1 motif; it reads GRTSNGKS. 106–111 contributes to the GTP binding site; sequence SNGKST. At threonine 111 the chain carries Phosphothreonine; by PINK1. The interval 129–130 is G2 motif; that stretch reads TT. Residues 199–202 form a G3 motif region; it reads DSPG. 258 to 261 lines the GTP pocket; the sequence is NRWD. Residues 258–261 form a G4 motif region; the sequence is NRWD. Glutamate 288 is a region of interest (G5 motif). 2 residues coordinate GTP: serine 305 and lysine 307. The tract at residues 359–385 is part of a helix bundle domain, formed by helices from N-terminal and C-terminal regions; sequence EQHTVRAKQIAEAVRLIMDSLHMAARE. Residues 391 to 434 are a coiled coil; sequence EEMREERQDRLKFIDKQLELLAQDYKLRIKQITEEVERQVSTAM. The residue at position 442 (serine 442) is a Phosphoserine; by PINK1. The chain crosses the membrane as a helical span at residues 605–625; it reads TGLASLTSRTSMGILVVGGVV. Position 626 (tryptophan 626) is a topological domain, mitochondrial intermembrane. Residues 627-647 traverse the membrane as a helical segment; that stretch reads KAVGWRLIALSFGLYGLLYVY. The Cytoplasmic segment spans residues 648 to 757; sequence ERLTWTTKAK…FTHQYLQPSR (110 aa). The stretch at 695-738 forms a coiled coil; the sequence is TFAHLCQQVDVTRENLEQEIAAMNKKIEVLDSLQSKAKLLRNKA. The part of a helix bundle domain, formed by helices from N-terminal and C-terminal regions stretch occupies residues 722-753; the sequence is EVLDSLQSKAKLLRNKAGWLDSELNMFTHQYL.

It belongs to the TRAFAC class dynamin-like GTPase superfamily. Dynamin/Fzo/YdjA family. Mitofusin subfamily. In terms of assembly, forms homomultimers and heteromultimers with MFN1. Oligomerization is essential for mitochondrion fusion. Interacts with VAT1. Interacts with STOML2; may form heterooligomers. Interacts (phosphorylated) with PRKN. Interacts with EIF2AK3. Interacts with THG1L; THG1L probably functions as a guanyl-nucleotide exchange factor/GEF, activating MFN2. In terms of processing, phosphorylated by PINK1. Ubiquitinated by non-degradative ubiquitin by PRKN, promoting mitochondrial fusion; deubiquitination by USP30 inhibits mitochondrial fusion. Ubiquitinated by HUWE1 when dietary stearate (C18:0) levels are low; ubiquitination inhibits mitochondrial fusion. Ubiquitous; expressed at low level. Highly expressed in heart and kidney.

The protein resides in the mitochondrion outer membrane. It catalyses the reaction GTP + H2O = GDP + phosphate + H(+). Functionally, mitochondrial outer membrane GTPase that mediates mitochondrial clustering and fusion. Mitochondria are highly dynamic organelles, and their morphology is determined by the equilibrium between mitochondrial fusion and fission events. Overexpression induces the formation of mitochondrial networks. Membrane clustering requires GTPase activity and may involve a major rearrangement of the coiled coil domains. Plays a central role in mitochondrial metabolism and may be associated with obesity and/or apoptosis processes. Plays an important role in the regulation of vascular smooth muscle cell proliferation. Involved in the clearance of damaged mitochondria via selective autophagy (mitophagy). Is required for PRKN recruitment to dysfunctional mitochondria. Involved in the control of unfolded protein response (UPR) upon ER stress including activation of apoptosis and autophagy during ER stress. Acts as an upstream regulator of EIF2AK3 and suppresses EIF2AK3 activation under basal conditions. This is Mitofusin-2 from Homo sapiens (Human).